Here is a 98-residue protein sequence, read N- to C-terminus: Putative septation protein SpoVG (98 aa).

Belongs to the SpoVG family.

In terms of biological role, essential for sporulation. Interferes with or is a negative regulator of the pathway leading to asymmetric septation. This is Putative septation protein SpoVG from Bacillus pumilus (strain SAFR-032).